Here is a 194-residue protein sequence, read N- to C-terminus: Dof zinc finger protein DOF1.7 (194 aa).

Residues 33-87 form a Dof-type zinc finger; it reads LKCPRCDSPNTKFCYYNNYNLSQPRHFCKNCRRYWTKGGALRNIPVGGGTRKSNK. Zn(2+) contacts are provided by C35, C38, C60, and C63. A disordered region spans residues 74–125; that stretch reads RNIPVGGGTRKSNKRSGSSPSSNLKNQTVAEKPDHHGSGSEEKEERVSGQEM. The segment covering 88–99 has biased composition (low complexity); the sequence is RSGSSPSSNLKN. Positions 104-121 are enriched in basic and acidic residues; sequence EKPDHHGSGSEEKEERVS.

The protein resides in the nucleus. In terms of biological role, transcription factor that binds specifically to a 5'-AA[AG]G-3' consensus core sequence. In Arabidopsis thaliana (Mouse-ear cress), this protein is Dof zinc finger protein DOF1.7 (DOF1.7).